Consider the following 72-residue polypeptide: Mitochondrial import protein 2 (72 aa).

Positions 1 to 22 are disordered; the sequence is MAEVLDLEIDPISDGEDDTYSS. At 1 to 34 the chain is on the cytoplasmic side; that stretch reads MAEVLDLEIDPISDGEDDTYSSELDDDLKDSIEQ. Residues 35–52 form a helical membrane-spanning segment; that stretch reads LERVLCLVVFPLLGKFLG. Residues 53–72 lie on the Mitochondrial intermembrane side of the membrane; it reads RKFAFHAWARWLERRRLVSN.

Belongs to the MIM2 family. As to quaternary structure, component of the mitochondrial outer import machinery (MIM) complex containing at least mim1 and mim2. Interacts with mim1. Interacts with mitophagy receptor atg43.

It is found in the mitochondrion outer membrane. In terms of biological role, component of the mitochondrial outer import machinery (MIM) complex that mediates transport of proteins into mitochondrial compartments. Promotes the insertion of tom70 into the outer mitochondrial membrane. Promotes the insertion of atg43 into the outer mitochondrial membrane. Involved in import of the subset of proteins with multiple alpha-helical transmembrane segments. This chain is Mitochondrial import protein 2, found in Schizosaccharomyces pombe (strain 972 / ATCC 24843) (Fission yeast).